A 133-amino-acid chain; its full sequence is Holo-[acyl-carrier-protein] synthase (133 aa).

Mg(2+) contacts are provided by Asp-8 and Glu-58.

It belongs to the P-Pant transferase superfamily. AcpS family. It depends on Mg(2+) as a cofactor.

The protein localises to the cytoplasm. It catalyses the reaction apo-[ACP] + CoA = holo-[ACP] + adenosine 3',5'-bisphosphate + H(+). Its function is as follows. Transfers the 4'-phosphopantetheine moiety from coenzyme A to a Ser of acyl-carrier-protein. The sequence is that of Holo-[acyl-carrier-protein] synthase from Sphingopyxis alaskensis (strain DSM 13593 / LMG 18877 / RB2256) (Sphingomonas alaskensis).